Here is a 339-residue protein sequence, read N- to C-terminus: MRVYYDRDADLSRILDKKIAIVGYGSQGRAHALNLVDSGVKNVAVALRPGSATAKKVEADGLKVMSVAEASAWADAIMILAPDELQAQIYRDEIAPNIKDGAALLFAHGLNVHFGLIEPKKTVDVLMVAPKGPGHTVRGEYQKGGGVPCLIAVHHDATGGAMDFGLAYASAIGGGRSGVIETNFREECETDLFGEQAVLCGGLVELIRAGFETLVEAGYAPEMAYFECLHEVKLIVDLIYEGGIANMNYSISNTAEYGEYVTGPRIVTSETKAEMKRVLEDIQSGRFVRDFMQENAVGAPSFKATRRRNAEHPIEEVGGRLRAMMPWITKNKLVDTERN.

In terms of domain architecture, KARI N-terminal Rossmann spans M1 to T182. Residues Y24 to Q27, R48, S51, T53, and D83 to Q86 contribute to the NADP(+) site. Residue H108 is part of the active site. G134 is an NADP(+) binding site. Positions N183 to I328 constitute a KARI C-terminal knotted domain. Mg(2+)-binding residues include D191, E195, E227, and E231. A substrate-binding site is contributed by S252.

This sequence belongs to the ketol-acid reductoisomerase family. Requires Mg(2+) as cofactor.

It catalyses the reaction (2R)-2,3-dihydroxy-3-methylbutanoate + NADP(+) = (2S)-2-acetolactate + NADPH + H(+). The catalysed reaction is (2R,3R)-2,3-dihydroxy-3-methylpentanoate + NADP(+) = (S)-2-ethyl-2-hydroxy-3-oxobutanoate + NADPH + H(+). It functions in the pathway amino-acid biosynthesis; L-isoleucine biosynthesis; L-isoleucine from 2-oxobutanoate: step 2/4. Its pathway is amino-acid biosynthesis; L-valine biosynthesis; L-valine from pyruvate: step 2/4. In terms of biological role, involved in the biosynthesis of branched-chain amino acids (BCAA). Catalyzes an alkyl-migration followed by a ketol-acid reduction of (S)-2-acetolactate (S2AL) to yield (R)-2,3-dihydroxy-isovalerate. In the isomerase reaction, S2AL is rearranged via a Mg-dependent methyl migration to produce 3-hydroxy-3-methyl-2-ketobutyrate (HMKB). In the reductase reaction, this 2-ketoacid undergoes a metal-dependent reduction by NADPH to yield (R)-2,3-dihydroxy-isovalerate. The sequence is that of Ketol-acid reductoisomerase (NADP(+)) from Phenylobacterium zucineum (strain HLK1).